Consider the following 104-residue polypeptide: U-scoloptoxin(10)-Cw1a (104 aa).

The N-terminal stretch at Met-1 to Thr-23 is a signal peptide.

Belongs to the scoloptoxin-10 family. In terms of processing, contains 3 disulfide bonds. In terms of tissue distribution, expressed by the venom gland.

The protein resides in the secreted. This Cormocephalus westwoodi (Westwood's green centipede) protein is U-scoloptoxin(10)-Cw1a.